We begin with the raw amino-acid sequence, 370 residues long: DNA replication and repair protein RecF (370 aa).

Residue 30 to 37 participates in ATP binding; it reads GPNGSGKT.

The protein belongs to the RecF family.

The protein resides in the cytoplasm. Its function is as follows. The RecF protein is involved in DNA metabolism; it is required for DNA replication and normal SOS inducibility. RecF binds preferentially to single-stranded, linear DNA. It also seems to bind ATP. This is DNA replication and repair protein RecF from Prosthecochloris aestuarii (strain DSM 271 / SK 413).